The sequence spans 493 residues: Probable malate:quinone oxidoreductase (493 aa).

This sequence belongs to the MQO family. It depends on FAD as a cofactor.

The catalysed reaction is (S)-malate + a quinone = a quinol + oxaloacetate. It participates in carbohydrate metabolism; tricarboxylic acid cycle; oxaloacetate from (S)-malate (quinone route): step 1/1. The sequence is that of Probable malate:quinone oxidoreductase from Mycobacterium tuberculosis (strain ATCC 25177 / H37Ra).